Here is a 168-residue protein sequence, read N- to C-terminus: Mitochondrial import inner membrane translocase subunit TIM14 (168 aa).

Residues 1-12 (MSSQSNTGNSIE) show a composition bias toward polar residues. The disordered stretch occupies residues 1-29 (MSSQSNTGNSIEAPQLPIPGQTNGSANVT). Topologically, residues 1-65 (MSSQSNTGNS…QALNYMGEHP (65 aa)) are mitochondrial intermembrane. The chain crosses the membrane as a helical span at residues 66 to 83 (VITGFGAFLTLYFTAGAY). The Mitochondrial matrix portion of the chain corresponds to 84–168 (KSISKGLNGG…DFLEKRGISK (85 aa)). One can recognise a J domain in the interval 112 to 168 (EALQILNLTENTLTKKKLKEVHRKIMLANHPDKGGSPFLATKINEAKDFLEKRGISK).

The protein belongs to the TIM14 family. Homodimer and heterodimer with PAM16/TIM16. Homodimerization may not be relevant in vivo, while heterodimerization is essential for activity regulation of mtHSP70. Component of the PAM complex, at least composed of mtHsp70, MGE1, TIM44, PAM16, PAM17 and PAM18/TIM14. Interacts directly with mtHsp70. Interacts directly with TIM17 subunit of the TIM23 complex.

Its subcellular location is the mitochondrion inner membrane. In terms of biological role, essential component of the PAM complex, a complex required for the translocation of transit peptide-containing proteins from the inner membrane into the mitochondrial matrix in an ATP-dependent manner. In the complex, it is required to stimulate activity of mtHSP70 (SSC1). In Saccharomyces cerevisiae (strain ATCC 204508 / S288c) (Baker's yeast), this protein is Mitochondrial import inner membrane translocase subunit TIM14 (PAM18).